A 731-amino-acid polypeptide reads, in one-letter code: Lanosterol synthase ERG7 (731 aa).

Threonine 2 bears the N-acetylthreonine mark. The PFTB 1 repeat unit spans residues 125–167; that stretch reads RIELIRYIVNTAHPVDGGWGLHSVDKSTVFGTVLNYVILRLLG. Aspartate 456 (proton donor) is an active-site residue. The stretch at 615–661 is one PFTB 2 repeat; it reads VRKGCDFLVSKQMKDGGWGESMKSSELHSYVDSEKSLVVQTAWALIA.

Belongs to the terpene cyclase/mutase family.

It is found in the lipid droplet. It localises to the endoplasmic reticulum membrane. The enzyme catalyses (S)-2,3-epoxysqualene = lanosterol. It functions in the pathway terpene metabolism; lanosterol biosynthesis; lanosterol from farnesyl diphosphate: step 3/3. Its activity is regulated as follows. Catalytic activity requires the presence of ERG27. In terms of biological role, lanosterol synthase; part of the third module of ergosterol biosynthesis pathway that includes the late steps of the pathway. ERG7 catalyzes the cyclization of (S)-2,3 oxidosqualene to lanosterol, a reaction that forms the sterol core. The third module or late pathway involves the ergosterol synthesis itself through consecutive reactions that mainly occur in the endoplasmic reticulum (ER) membrane. Firstly, the squalene synthase ERG9 catalyzes the condensation of 2 farnesyl pyrophosphate moieties to form squalene, which is the precursor of all steroids. Squalene synthase is crucial for balancing the incorporation of farnesyl diphosphate (FPP) into sterol and nonsterol isoprene synthesis. Secondly, the squalene epoxidase ERG1 catalyzes the stereospecific oxidation of squalene to (S)-2,3-epoxysqualene, which is considered to be a rate-limiting enzyme in steroid biosynthesis. Then, the lanosterol synthase ERG7 catalyzes the cyclization of (S)-2,3 oxidosqualene to lanosterol, a reaction that forms the sterol core. In the next steps, lanosterol is transformed to zymosterol through a complex process involving various demethylation, reduction and desaturation reactions. The lanosterol 14-alpha-demethylase ERG11 (also known as CYP51) catalyzes C14-demethylation of lanosterol to produce 4,4'-dimethyl cholesta-8,14,24-triene-3-beta-ol, which is critical for ergosterol biosynthesis. The C-14 reductase ERG24 reduces the C14=C15 double bond of 4,4-dimethyl-cholesta-8,14,24-trienol to produce 4,4-dimethyl-cholesta-8,24-dienol. 4,4-dimethyl-cholesta-8,24-dienol is substrate of the C-4 demethylation complex ERG25-ERG26-ERG27 in which ERG25 catalyzes the three-step monooxygenation required for the demethylation of 4,4-dimethyl and 4alpha-methylsterols, ERG26 catalyzes the oxidative decarboxylation that results in a reduction of the 3-beta-hydroxy group at the C-3 carbon to an oxo group, and ERG27 is responsible for the reduction of the keto group on the C-3. ERG28 has a role as a scaffold to help anchor ERG25, ERG26 and ERG27 to the endoplasmic reticulum and ERG29 regulates the activity of the iron-containing C4-methylsterol oxidase ERG25. Then, the sterol 24-C-methyltransferase ERG6 catalyzes the methyl transfer from S-adenosyl-methionine to the C-24 of zymosterol to form fecosterol. The C-8 sterol isomerase ERG2 catalyzes the reaction which results in unsaturation at C-7 in the B ring of sterols and thus converts fecosterol to episterol. The sterol-C5-desaturase ERG3 then catalyzes the introduction of a C-5 double bond in the B ring to produce 5-dehydroepisterol. The C-22 sterol desaturase ERG5 further converts 5-dehydroepisterol into ergosta-5,7,22,24(28)-tetraen-3beta-ol by forming the C-22(23) double bond in the sterol side chain. Finally, ergosta-5,7,22,24(28)-tetraen-3beta-ol is substrate of the C-24(28) sterol reductase ERG4 to produce ergosterol. The chain is Lanosterol synthase ERG7 from Saccharomyces cerevisiae (strain ATCC 204508 / S288c) (Baker's yeast).